A 357-amino-acid polypeptide reads, in one-letter code: Peptide chain release factor 1 (357 aa).

Gln232 bears the N5-methylglutamine mark.

The protein belongs to the prokaryotic/mitochondrial release factor family. Post-translationally, methylated by PrmC. Methylation increases the termination efficiency of RF1.

The protein resides in the cytoplasm. Its function is as follows. Peptide chain release factor 1 directs the termination of translation in response to the peptide chain termination codons UAG and UAA. This is Peptide chain release factor 1 from Nitratidesulfovibrio vulgaris (strain ATCC 29579 / DSM 644 / CCUG 34227 / NCIMB 8303 / VKM B-1760 / Hildenborough) (Desulfovibrio vulgaris).